Reading from the N-terminus, the 205-residue chain is Lymphotoxin-alpha (205 aa).

Positions 1–34 are cleaved as a signal peptide; the sequence is MTPPGRLYLPRVRGTRLLFLLLGLLLALPPRAKG. In terms of domain architecture, THD spans 63-205; that stretch reads PAAHLVGDPS…SSVFFGAFAL (143 aa). N-linked (GlcNAc...) asparagine glycosylation is present at Asn-96. Cys-120 and Cys-156 form a disulfide bridge.

It belongs to the tumor necrosis factor family. In terms of assembly, homotrimer, and heterotrimer of either two LTB and one LTA subunits or (less prevalent) two LTA and one LTB subunits. Interacts with TNFRSF14.

The protein resides in the secreted. It is found in the membrane. Its function is as follows. Cytokine that in its homotrimeric form binds to TNFRSF1A/TNFR1, TNFRSF1B/TNFBR and TNFRSF14/HVEM. In its heterotrimeric form with LTB binds to TNFRSF3/LTBR. Lymphotoxin is produced by lymphocytes and is cytotoxic for a wide range of tumor cells in vitro and in vivo. The sequence is that of Lymphotoxin-alpha (LTA) from Marmota monax (Woodchuck).